The chain runs to 486 residues: Glutamate--tRNA ligase 2 (486 aa).

Positions 12-22 (PSPTGELHIGN) match the 'HIGH' region motif. Residues 252-256 (KLSKR) carry the 'KMSKS' region motif. K255 is an ATP binding site.

The protein belongs to the class-I aminoacyl-tRNA synthetase family. Glutamate--tRNA ligase type 1 subfamily. Monomer.

It is found in the cytoplasm. It carries out the reaction tRNA(Glu) + L-glutamate + ATP = L-glutamyl-tRNA(Glu) + AMP + diphosphate. Functionally, catalyzes the attachment of glutamate to tRNA(Glu) in a two-step reaction: glutamate is first activated by ATP to form Glu-AMP and then transferred to the acceptor end of tRNA(Glu). This Syntrophus aciditrophicus (strain SB) protein is Glutamate--tRNA ligase 2.